We begin with the raw amino-acid sequence, 353 residues long: Protein CYTOKININ-RESPONSIVE GATA TRANSCRIPTION FACTOR 1 (353 aa).

Residues 137–144 (IRKGAATD) carry the Nuclear localization signal 1 motif. Residues 142–166 (ATDPEGGAVRKPRRRAQAHQDESQQ) form a disordered region. The GATA-type zinc finger occupies 178–203 (CSDCNTTKTPLWRSGPCGPKSLCNAC). A Nuclear localization signal 2 motif is present at residues 244-251 (EKRAADVD).

It belongs to the type IV zinc-finger family. Class B subfamily. As to expression, mostly expressed in leaves and stems, and, at low levels, in roots.

The protein resides in the nucleus. Its function is as follows. Transcriptional regulator that specifically binds 5'-GATA-3' or 5'-GAT-3' motifs within gene promoters. Influences the expression of nuclear encoded chloroplast-targeted genes. Regulates chloroplast development and promotes chlorophyll accumulation. Modulates plant architecture (e.g. height, length and width of leaf blades, and flowering tillers production) and represses tillering, probably by modulating number of cells. Promotes senescence. Involved in grain filling, panicle development and starch production. This Oryza sativa subsp. japonica (Rice) protein is Protein CYTOKININ-RESPONSIVE GATA TRANSCRIPTION FACTOR 1.